Reading from the N-terminus, the 405-residue chain is Tryptophan synthase beta chain (405 aa).

The residue at position 98 (Lys-98) is an N6-(pyridoxal phosphate)lysine.

It belongs to the TrpB family. Tetramer of two alpha and two beta chains. The cofactor is pyridoxal 5'-phosphate.

It catalyses the reaction (1S,2R)-1-C-(indol-3-yl)glycerol 3-phosphate + L-serine = D-glyceraldehyde 3-phosphate + L-tryptophan + H2O. It functions in the pathway amino-acid biosynthesis; L-tryptophan biosynthesis; L-tryptophan from chorismate: step 5/5. Its function is as follows. The beta subunit is responsible for the synthesis of L-tryptophan from indole and L-serine. The polypeptide is Tryptophan synthase beta chain (Xanthomonas axonopodis pv. citri (strain 306)).